Here is a 461-residue protein sequence, read N- to C-terminus: Putative transcription initiation factor IIB-like protein (461 aa).

The tract at residues 113–142 (SESLENIQSENSENNDNFTDNNTKKSPTKS) is disordered. The span at 121 to 137 (SENSENNDNFTDNNTKK) shows a compositional bias: low complexity. Residues 141-173 (KSRICSGCGSKGTLLEDQSSSVLVCSECGMIND) form a TFIIB-type zinc finger. Zn(2+)-binding residues include Cys-145, Cys-165, and Cys-168. Repeat copies occupy residues 246 to 327 (ISTI…EKKV) and 360 to 430 (IRRH…DVTI).

It belongs to the TFIIB family.

This chain is Putative transcription initiation factor IIB-like protein, found in Acanthamoeba polyphaga mimivirus (APMV).